Here is a 1142-residue protein sequence, read N- to C-terminus: Fibronectin type-III domain-containing protein 3A (1142 aa).

The tract at residues 104 to 191 is disordered; sequence YGDVDAHSTH…KSGKGKGGTQ (88 aa). Over residues 107–145 the composition is skewed to basic and acidic residues; that stretch reads VDAHSTHGRSNFRDERSSKTYERLQKKLKDRQGTQKDKM. The segment covering 146–158 has biased composition (low complexity); that stretch reads SSPPSSPQKCPSP. Phosphoserine occurs at positions 147, 151, and 157. Fibronectin type-III domains lie at 212-313, 317-409, 413-506, 510-604, 608-701, 705-795, 805-894, 895-989, and 990-1095; these read NIVK…TLSC, IPNP…TSGC, MPAS…TCPD, IPVK…TPAV, PCLP…TAPG, QCKP…TPPS, EISD…TKPL, PPDP…TPKS, and VPAA…TEPP. Residue lysine 328 is modified to N6-acetyllysine. The helical transmembrane segment at 1121-1141 threads the bilayer; it reads NLVLFAFFSILIAFIIQYFVI.

This sequence belongs to the FNDC3 family.

It localises to the golgi apparatus membrane. Functionally, mediates spermatid-Sertoli adhesion during spermatogenesis. The protein is Fibronectin type-III domain-containing protein 3A (FNDC3A) of Pongo abelii (Sumatran orangutan).